We begin with the raw amino-acid sequence, 88 residues long: Small ribosomal subunit protein uS15 (88 aa).

This sequence belongs to the universal ribosomal protein uS15 family. Part of the 30S ribosomal subunit. Forms a bridge to the 50S subunit in the 70S ribosome, contacting the 23S rRNA.

In terms of biological role, one of the primary rRNA binding proteins, it binds directly to 16S rRNA where it helps nucleate assembly of the platform of the 30S subunit by binding and bridging several RNA helices of the 16S rRNA. Functionally, forms an intersubunit bridge (bridge B4) with the 23S rRNA of the 50S subunit in the ribosome. The sequence is that of Small ribosomal subunit protein uS15 from Halothermothrix orenii (strain H 168 / OCM 544 / DSM 9562).